The chain runs to 665 residues: Long chain acyl-CoA synthetase 2 (665 aa).

Residue 228 to 239 (IMYTSGTTGEPK) participates in ATP binding. The fatty acid-binding stretch occupies residues 496–520 (DGWFHTGDIGEWQEDGSMKIIDRKK).

Belongs to the ATP-dependent AMP-binding enzyme family. The cofactor is Mg(2+). Expressed along the entire length of the stem, but expression was not entirely epidermal specific, with some expression found in internal cell layers as well. Was expressed in leave epidermal cells, flowers (sepals, petals, stamens, filaments and carpel), siliques and developing seeds. In roots, expression was detected in an internal cell layer, probably the endodermal layer.

It is found in the endoplasmic reticulum. It catalyses the reaction a long-chain fatty acid + ATP + CoA = a long-chain fatty acyl-CoA + AMP + diphosphate. The protein operates within lipid metabolism; fatty acid metabolism. Functionally, activation of long-chain fatty acids for both synthesis of cellular lipids, and degradation via beta-oxidation. Acts in the cutin pathway. Preferentially uses palmitate, palmitoleate, oleate and linoleate. Required for repression of lateral root formation through its role in cutin biosynthesis and subsequent aerial tissues permeability. This Arabidopsis thaliana (Mouse-ear cress) protein is Long chain acyl-CoA synthetase 2 (LACS2).